Here is a 245-residue protein sequence, read N- to C-terminus: uncharacterized protein (245 aa).

The signal sequence occupies residues 1–27 (MKLKKRVSMFLVALTMCGGLFVTPAKA).

This is an uncharacterized protein from Bacillus subtilis (strain 168).